Consider the following 554-residue polypeptide: Inactive sesquithujene synthase (554 aa).

The Mg(2+) site is built by Asp308 and Asp312. Residues Asp308, Asp312, Arg449, and Asn452 each contribute to the substrate site. A DDXXD motif motif is present at residues 308–312 (DDMFD). The Mg(2+) site is built by Asn452, Ser456, and Glu460.

Belongs to the terpene synthase family. As to quaternary structure, monomer. The cofactor is Mg(2+). Mn(2+) is required as a cofactor.

The protein localises to the cytoplasm. The protein operates within secondary metabolite biosynthesis; terpenoid biosynthesis. Functionally, non-functional sesquiterpene synthase having less than 1% of the activity found in cv. Delprim. This is Inactive sesquithujene synthase from Zea mays (Maize).